The following is a 451-amino-acid chain: Tubulin alpha-1 chain (451 aa).

Q11 is a binding site for GTP. At K40 the chain carries N6-acetyllysine. E71, G144, T145, T179, N206, and N228 together coordinate GTP. E71 contributes to the Mg(2+) binding site. E254 is an active-site residue.

This sequence belongs to the tubulin family. In terms of assembly, dimer of alpha and beta chains. A typical microtubule is a hollow water-filled tube with an outer diameter of 25 nm and an inner diameter of 15 nM. Alpha-beta heterodimers associate head-to-tail to form protofilaments running lengthwise along the microtubule wall with the beta-tubulin subunit facing the microtubule plus end conferring a structural polarity. Microtubules usually have 13 protofilaments but different protofilament numbers can be found in some organisms and specialized cells. Mg(2+) is required as a cofactor. Undergoes a tyrosination/detyrosination cycle, the cyclic removal and re-addition of a C-terminal tyrosine residue by the enzymes tubulin tyrosine carboxypeptidase (TTCP) and tubulin tyrosine ligase (TTL), respectively. Post-translationally, acetylation of alpha chains at Lys-40 stabilizes microtubules and affects affinity and processivity of microtubule motors. This modification has a role in multiple cellular functions, ranging from cell motility, cell cycle progression or cell differentiation to intracellular trafficking and signaling.

It localises to the cytoplasm. Its subcellular location is the cytoskeleton. It carries out the reaction GTP + H2O = GDP + phosphate + H(+). Its function is as follows. Tubulin is the major constituent of microtubules, a cylinder consisting of laterally associated linear protofilaments composed of alpha- and beta-tubulin heterodimers. Microtubules grow by the addition of GTP-tubulin dimers to the microtubule end, where a stabilizing cap forms. Below the cap, tubulin dimers are in GDP-bound state, owing to GTPase activity of alpha-tubulin. This chain is Tubulin alpha-1 chain (TUBA1), found in Eleusine indica (Goosegrass).